Here is a 533-residue protein sequence, read N- to C-terminus: Apolipoprotein N-acyltransferase (533 aa).

The next 5 helical transmembrane spans lie at 17–37 (FFLP…WPAV), 72–92 (LLFC…GGIL), 116–136 (GFRS…WAYM), 165–185 (GVWG…LLFM), and 190–210 (FQVK…PLLY). One can recognise a CN hydrolase domain in the interval 232–499 (VQPDIDPHEK…QSVLTADVPL (268 aa)). The active-site Proton acceptor is E274. The active site involves K352. The active-site Nucleophile is the C410. Residues 510-530 (PDLVPHVCLGIAGVLALVAAV) traverse the membrane as a helical segment.

Belongs to the CN hydrolase family. Apolipoprotein N-acyltransferase subfamily.

It localises to the cell inner membrane. It carries out the reaction N-terminal S-1,2-diacyl-sn-glyceryl-L-cysteinyl-[lipoprotein] + a glycerophospholipid = N-acyl-S-1,2-diacyl-sn-glyceryl-L-cysteinyl-[lipoprotein] + a 2-acyl-sn-glycero-3-phospholipid + H(+). It functions in the pathway protein modification; lipoprotein biosynthesis (N-acyl transfer). Catalyzes the phospholipid dependent N-acylation of the N-terminal cysteine of apolipoprotein, the last step in lipoprotein maturation. The chain is Apolipoprotein N-acyltransferase from Chlorobaculum tepidum (strain ATCC 49652 / DSM 12025 / NBRC 103806 / TLS) (Chlorobium tepidum).